We begin with the raw amino-acid sequence, 196 residues long: Small ribosomal subunit protein uS4m (196 aa).

The region spanning 88-154 is the S4 RNA-binding domain; sequence KRLDVILVRL…FKSNIRKNFQ (67 aa).

This sequence belongs to the universal ribosomal protein uS4 family.

It localises to the mitochondrion. The sequence is that of Small ribosomal subunit protein uS4m (RPS4) from Marchantia polymorpha (Common liverwort).